The sequence spans 377 residues: uncharacterized protein (377 aa).

A helical membrane pass occupies residues Tyr-21–Ala-43.

It is found in the membrane. This is an uncharacterized protein from Treponema pallidum (strain Nichols).